Here is a 204-residue protein sequence, read N- to C-terminus: Urease accessory protein UreG (204 aa).

12–19 (GPVGSGKT) contributes to the GTP binding site.

This sequence belongs to the SIMIBI class G3E GTPase family. UreG subfamily. In terms of assembly, homodimer. UreD, UreF and UreG form a complex that acts as a GTP-hydrolysis-dependent molecular chaperone, activating the urease apoprotein by helping to assemble the nickel containing metallocenter of UreC. The UreE protein probably delivers the nickel.

It is found in the cytoplasm. Its function is as follows. Facilitates the functional incorporation of the urease nickel metallocenter. This process requires GTP hydrolysis, probably effectuated by UreG. The chain is Urease accessory protein UreG from Pseudomonas paraeruginosa (strain DSM 24068 / PA7) (Pseudomonas aeruginosa (strain PA7)).